The chain runs to 525 residues: Probable alpha-galactosidase A (525 aa).

The first 17 residues, 1 to 17 (MHPSMTLLAILPPLVRA), serve as a signal peptide directing secretion. A disulfide bond links Cys40 and Cys72. Residues Asn43, Asn81, and Asn117 are each glycosylated (N-linked (GlcNAc...) asparagine). Cys120 and Cys150 form a disulfide bridge. The active-site Nucleophile is the Asp148. Asn197 carries an N-linked (GlcNAc...) asparagine glycan. The active-site Proton donor is Asp206. The 124-residue stretch at 402–525 (PPDCPMVIPT…GLPSGVDIEA (124 aa)) folds into the Ricin B-type lectin domain. 2 disulfides stabilise this stretch: Cys422-Cys434 and Cys459-Cys472.

This sequence belongs to the glycosyl hydrolase 27 family.

The protein resides in the secreted. The enzyme catalyses Hydrolysis of terminal, non-reducing alpha-D-galactose residues in alpha-D-galactosides, including galactose oligosaccharides, galactomannans and galactolipids.. Its function is as follows. Hydrolyzes a variety of simple alpha-D-galactoside as well as more complex molecules such as oligosaccharides and polysaccharides. The chain is Probable alpha-galactosidase A (aglA) from Aspergillus clavatus (strain ATCC 1007 / CBS 513.65 / DSM 816 / NCTC 3887 / NRRL 1 / QM 1276 / 107).